Consider the following 331-residue polypeptide: UPF0194 membrane protein YbhG (331 aa).

The signal sequence occupies residues 1 to 19 (MKKPVVIGLAIAAIVTVIA). Residues 107-208 (EEIAQAAAAV…LDLQDTTLIA (102 aa)) are a coiled coil.

This sequence belongs to the UPF0194 family.

The protein resides in the periplasm. This Salmonella arizonae (strain ATCC BAA-731 / CDC346-86 / RSK2980) protein is UPF0194 membrane protein YbhG.